We begin with the raw amino-acid sequence, 98 residues long: NADH-ubiquinone oxidoreductase chain 4L (98 aa).

Transmembrane regions (helical) follow at residues 26 to 46 and 61 to 81; these read LVASLLCLEGMMMSLFIMATL and IILLVFAACEAAVGLALLISI.

The protein belongs to the complex I subunit 4L family. Core subunit of respiratory chain NADH dehydrogenase (Complex I) which is composed of 45 different subunits.

It is found in the mitochondrion inner membrane. It catalyses the reaction a ubiquinone + NADH + 5 H(+)(in) = a ubiquinol + NAD(+) + 4 H(+)(out). Functionally, core subunit of the mitochondrial membrane respiratory chain NADH dehydrogenase (Complex I) which catalyzes electron transfer from NADH through the respiratory chain, using ubiquinone as an electron acceptor. Part of the enzyme membrane arm which is embedded in the lipid bilayer and involved in proton translocation. The chain is NADH-ubiquinone oxidoreductase chain 4L (MT-ND4L) from Macaca nigrescens (Gorontalo macaque).